Reading from the N-terminus, the 160-residue chain is 2-amino-4-hydroxy-6-hydroxymethyldihydropteridine pyrophosphokinase (160 aa).

This sequence belongs to the HPPK family. Monomer.

It catalyses the reaction 6-hydroxymethyl-7,8-dihydropterin + ATP = (7,8-dihydropterin-6-yl)methyl diphosphate + AMP + H(+). The protein operates within cofactor biosynthesis; tetrahydrofolate biosynthesis; 2-amino-4-hydroxy-6-hydroxymethyl-7,8-dihydropteridine diphosphate from 7,8-dihydroneopterin triphosphate: step 4/4. Functionally, catalyzes the transfer of pyrophosphate from adenosine triphosphate (ATP) to 6-hydroxymethyl-7,8-dihydropterin, an enzymatic step in folate biosynthesis pathway. This is 2-amino-4-hydroxy-6-hydroxymethyldihydropteridine pyrophosphokinase (folK) from Haemophilus influenzae (strain ATCC 51907 / DSM 11121 / KW20 / Rd).